The chain runs to 133 residues: ATP synthase epsilon chain (133 aa).

It belongs to the ATPase epsilon chain family. F-type ATPases have 2 components, CF(1) - the catalytic core - and CF(0) - the membrane proton channel. CF(1) has five subunits: alpha(3), beta(3), gamma(1), delta(1), epsilon(1). CF(0) has three main subunits: a, b and c.

It is found in the cell membrane. Its function is as follows. Produces ATP from ADP in the presence of a proton gradient across the membrane. This Clostridium botulinum (strain 657 / Type Ba4) protein is ATP synthase epsilon chain.